A 484-amino-acid polypeptide reads, in one-letter code: UDP-N-acetylmuramate--L-alanine ligase (484 aa).

124–130 contacts ATP; sequence GTHGKTT.

Belongs to the MurCDEF family.

The protein resides in the cytoplasm. The catalysed reaction is UDP-N-acetyl-alpha-D-muramate + L-alanine + ATP = UDP-N-acetyl-alpha-D-muramoyl-L-alanine + ADP + phosphate + H(+). Its pathway is cell wall biogenesis; peptidoglycan biosynthesis. Functionally, cell wall formation. The protein is UDP-N-acetylmuramate--L-alanine ligase of Pseudoalteromonas atlantica (strain T6c / ATCC BAA-1087).